We begin with the raw amino-acid sequence, 400 residues long: NADH-quinone oxidoreductase subunit D (400 aa).

This sequence belongs to the complex I 49 kDa subunit family. NDH-1 is composed of 14 different subunits. Subunits NuoB, C, D, E, F, and G constitute the peripheral sector of the complex.

Its subcellular location is the cell inner membrane. It catalyses the reaction a quinone + NADH + 5 H(+)(in) = a quinol + NAD(+) + 4 H(+)(out). NDH-1 shuttles electrons from NADH, via FMN and iron-sulfur (Fe-S) centers, to quinones in the respiratory chain. The immediate electron acceptor for the enzyme in this species is believed to be ubiquinone. Couples the redox reaction to proton translocation (for every two electrons transferred, four hydrogen ions are translocated across the cytoplasmic membrane), and thus conserves the redox energy in a proton gradient. The polypeptide is NADH-quinone oxidoreductase subunit D (Granulibacter bethesdensis (strain ATCC BAA-1260 / CGDNIH1)).